We begin with the raw amino-acid sequence, 255 residues long: tRNA (guanine-N(1)-)-methyltransferase (255 aa).

Residues Gly-112 and 131 to 136 contribute to the S-adenosyl-L-methionine site; that span reads LGDYVL.

This sequence belongs to the RNA methyltransferase TrmD family. Homodimer.

It is found in the cytoplasm. The enzyme catalyses guanosine(37) in tRNA + S-adenosyl-L-methionine = N(1)-methylguanosine(37) in tRNA + S-adenosyl-L-homocysteine + H(+). Specifically methylates guanosine-37 in various tRNAs. This Lacticaseibacillus paracasei (strain ATCC 334 / BCRC 17002 / CCUG 31169 / CIP 107868 / KCTC 3260 / NRRL B-441) (Lactobacillus paracasei) protein is tRNA (guanine-N(1)-)-methyltransferase.